The primary structure comprises 262 residues: Phosphatidylglycerol--prolipoprotein diacylglyceryl transferase (262 aa).

4 helical membrane passes run 17-37, 57-77, 95-115, and 119-139; these read LAIHWYGLMYLIGFALVYALG, LIFYSVLGVVLGGRLGYVLFY, GGMSFHGGLIGVIVVMLLFAH, and LGFFTVSDFIAPLIPLGLAAG. An a 1,2-diacyl-sn-glycero-3-phospho-(1'-sn-glycerol)-binding site is contributed by R140. 3 helical membrane passes run 173–193, 200–220, and 227–247; these read PSQLYELGLEGIVLFALLWWY, AGQVSAMFLMGYGAFRFLVEF, and FLGLLAAGLSMGQWLSIPMVL.

Belongs to the Lgt family.

The protein localises to the cell inner membrane. It carries out the reaction L-cysteinyl-[prolipoprotein] + a 1,2-diacyl-sn-glycero-3-phospho-(1'-sn-glycerol) = an S-1,2-diacyl-sn-glyceryl-L-cysteinyl-[prolipoprotein] + sn-glycerol 1-phosphate + H(+). It functions in the pathway protein modification; lipoprotein biosynthesis (diacylglyceryl transfer). In terms of biological role, catalyzes the transfer of the diacylglyceryl group from phosphatidylglycerol to the sulfhydryl group of the N-terminal cysteine of a prolipoprotein, the first step in the formation of mature lipoproteins. The polypeptide is Phosphatidylglycerol--prolipoprotein diacylglyceryl transferase (Bordetella bronchiseptica (strain ATCC BAA-588 / NCTC 13252 / RB50) (Alcaligenes bronchisepticus)).